Reading from the N-terminus, the 250-residue chain is ATP synthase subunit a (250 aa).

5 helical membrane passes run 27 to 47 (TDTVLSTAIAGLIVIALAFYL), 86 to 106 (FVLPLAVTIFVFILISNWLAV), 129 to 149 (INYVLALALFVFVCYHTAGIW), 191 to 211 (IFAGGILVALIALFPPYIMWA), and 219 to 239 (FDLFVGAIQAFIFALLTILYF).

Belongs to the ATPase A chain family. F-type ATPases have 2 components, CF(1) - the catalytic core - and CF(0) - the membrane proton channel. CF(1) has five subunits: alpha(3), beta(3), gamma(1), delta(1), epsilon(1). CF(0) has three main subunits: a(1), b(2) and c(9-12). The alpha and beta chains form an alternating ring which encloses part of the gamma chain. CF(1) is attached to CF(0) by a central stalk formed by the gamma and epsilon chains, while a peripheral stalk is formed by the delta and b chains.

The protein resides in the cell membrane. Its function is as follows. Key component of the proton channel; it plays a direct role in the translocation of protons across the membrane. This is ATP synthase subunit a from Mycobacterium bovis (strain ATCC BAA-935 / AF2122/97).